The following is a 214-amino-acid chain: uncharacterized protein (214 aa).

2 CBS domains span residues 7 to 65 (MDKN…KKPI) and 69 to 129 (MRPV…EIPV).

This is an uncharacterized protein from Methanocaldococcus jannaschii (strain ATCC 43067 / DSM 2661 / JAL-1 / JCM 10045 / NBRC 100440) (Methanococcus jannaschii).